The sequence spans 211 residues: Ribonuclease T (211 aa).

The Exonuclease domain maps to 24 to 198; sequence VVVDVETGGF…YDAEKTAHLF (175 aa). Residues Asp27, Glu29, His185, and Asp190 each coordinate Mg(2+). Catalysis depends on His185, which acts as the Proton donor/acceptor.

This sequence belongs to the RNase T family. Homodimer. The cofactor is Mg(2+).

Functionally, trims short 3' overhangs of a variety of RNA species, leaving a one or two nucleotide 3' overhang. Responsible for the end-turnover of tRNA: specifically removes the terminal AMP residue from uncharged tRNA (tRNA-C-C-A). Also appears to be involved in tRNA biosynthesis. The sequence is that of Ribonuclease T from Xylella fastidiosa (strain Temecula1 / ATCC 700964).